The primary structure comprises 104 residues: Replication factor A protein 3 (104 aa).

The protein belongs to the replication factor A protein 3 family. In terms of assembly, component of the heterotrimeric canonical replication protein A complex (RPA).

The protein resides in the nucleus. Its function is as follows. As part of the replication protein A (RPA/RP-A), a single-stranded DNA-binding heterotrimeric complex, may play an essential role in DNA replication, recombination and repair. Binds and stabilizes single-stranded DNA intermediates, preventing complementary DNA reannealing and recruiting different proteins involved in DNA metabolism. This is Replication factor A protein 3 (ssb3) from Schizosaccharomyces pombe (strain 972 / ATCC 24843) (Fission yeast).